A 719-amino-acid chain; its full sequence is Polyribonucleotide nucleotidyltransferase (719 aa).

Asp507 and Asp513 together coordinate Mg(2+). The KH domain occupies 573–633 (PKLELFSVDP…EQIKAAKDYI (61 aa)). Positions 658 to 719 (GQEFQGIVKK…NGKISVDLCE (62 aa)) constitute an S1 motif domain.

Belongs to the polyribonucleotide nucleotidyltransferase family. The cofactor is Mg(2+).

The protein resides in the cytoplasm. It carries out the reaction RNA(n+1) + phosphate = RNA(n) + a ribonucleoside 5'-diphosphate. In terms of biological role, involved in mRNA degradation. Catalyzes the phosphorolysis of single-stranded polyribonucleotides processively in the 3'- to 5'-direction. The polypeptide is Polyribonucleotide nucleotidyltransferase (Campylobacter jejuni subsp. jejuni serotype O:23/36 (strain 81-176)).